Consider the following 344-residue polypeptide: Phenylalanine--tRNA ligase alpha subunit (344 aa).

A Mg(2+)-binding site is contributed by glutamate 255.

It belongs to the class-II aminoacyl-tRNA synthetase family. Phe-tRNA synthetase alpha subunit type 1 subfamily. Tetramer of two alpha and two beta subunits. Mg(2+) serves as cofactor.

Its subcellular location is the cytoplasm. The catalysed reaction is tRNA(Phe) + L-phenylalanine + ATP = L-phenylalanyl-tRNA(Phe) + AMP + diphosphate + H(+). This is Phenylalanine--tRNA ligase alpha subunit from Cytophaga hutchinsonii (strain ATCC 33406 / DSM 1761 / CIP 103989 / NBRC 15051 / NCIMB 9469 / D465).